A 78-amino-acid chain; its full sequence is Acyl carrier protein (78 aa).

Residues 2-77 (STIEERVKKI…AAIDYVNAHQ (76 aa)) form the Carrier domain. Position 37 is an O-(pantetheine 4'-phosphoryl)serine (Ser-37).

This sequence belongs to the acyl carrier protein (ACP) family. Post-translationally, 4'-phosphopantetheine is transferred from CoA to a specific serine of apo-ACP by AcpS. This modification is essential for activity because fatty acids are bound in thioester linkage to the sulfhydryl of the prosthetic group.

The protein resides in the cytoplasm. Its pathway is lipid metabolism; fatty acid biosynthesis. Carrier of the growing fatty acid chain in fatty acid biosynthesis. The chain is Acyl carrier protein from Pseudomonas entomophila (strain L48).